The following is a 326-amino-acid chain: Tryptophan--tRNA ligase (326 aa).

ATP-binding positions include 11-13 (QPT) and 19-20 (GN). Residues 12 to 20 (PTGQIHLGN) carry the 'HIGH' region motif. Asp-135 provides a ligand contact to L-tryptophan. ATP-binding positions include 147 to 149 (GED), Val-186, and 195 to 199 (KMSKS). Positions 195-199 (KMSKS) match the 'KMSKS' region motif.

The protein belongs to the class-I aminoacyl-tRNA synthetase family. In terms of assembly, homodimer.

Its subcellular location is the cytoplasm. The enzyme catalyses tRNA(Trp) + L-tryptophan + ATP = L-tryptophyl-tRNA(Trp) + AMP + diphosphate + H(+). In terms of biological role, catalyzes the attachment of tryptophan to tRNA(Trp). This is Tryptophan--tRNA ligase from Helicobacter pylori (strain ATCC 700392 / 26695) (Campylobacter pylori).